The chain runs to 312 residues: Zinc transporter ZitB (312 aa).

5 consecutive transmembrane segments (helical) span residues 21-41 (LLFA…GGIL), 48-68 (LADA…LLVV), 90-110 (AAFV…WEAI), 123-143 (LMMV…WILH), and 164-184 (LLGS…GWTP).

It belongs to the cation diffusion facilitator (CDF) transporter (TC 2.A.4) family. SLC30A subfamily.

It is found in the cell inner membrane. Involved in zinc efflux across the cytoplasmic membrane, thus reducing zinc accumulation in the cytoplasm and rendering bacteria more resistant to zinc. It may contribute to zinc homeostasis at low concentrations of zinc. In Salmonella typhi, this protein is Zinc transporter ZitB.